Here is a 785-residue protein sequence, read N- to C-terminus: Arrestin domain-containing protein D (785 aa).

Disordered stretches follow at residues 29–69, 172–205, 326–367, 435–486, and 608–642; these read QNES…SKYP, ILLP…TTTT, SNNS…ITNN, SNSN…SDHN, and YSSS…LDEQ. Positions 173 to 205 are enriched in low complexity; the sequence is LLPTTTSTQNSTLSPTLLSSNLNSKSSTTTTTT. Over residues 435-450 the composition is skewed to low complexity; the sequence is SNSNSSSSGGSSNKNN. A compositionally biased stretch (basic residues) spans 466–478; that stretch reads SNKKSSGSHRYHY. Positions 608–633 are enriched in low complexity; that stretch reads YSSSGSGSGSGSSNSNSNHSSSNYLN. An FYVE-type zinc finger spans residues 682–742; sequence ESSITNCNLC…ICLMCFDAVK (61 aa). Residues Cys688, Cys691, Cys704, Cys707, Cys712, Cys715, Cys734, and Cys737 each coordinate Zn(2+). The segment at 688 to 738 adopts an RING-type; degenerate zinc-finger fold; that stretch reads CNLCDNTFTIIRRTHHCRACGGVFCEACSNQKVCLYGFGVNNKVRICLMCF.

Belongs to the arrestin family.

The protein is Arrestin domain-containing protein D (adcD) of Dictyostelium discoideum (Social amoeba).